Reading from the N-terminus, the 123-residue chain is Large ribosomal subunit protein bL12 (123 aa).

The protein belongs to the bacterial ribosomal protein bL12 family. Homodimer. Part of the ribosomal stalk of the 50S ribosomal subunit. Forms a multimeric L10(L12)X complex, where L10 forms an elongated spine to which 2 to 4 L12 dimers bind in a sequential fashion. Binds GTP-bound translation factors.

Functionally, forms part of the ribosomal stalk which helps the ribosome interact with GTP-bound translation factors. Is thus essential for accurate translation. The sequence is that of Large ribosomal subunit protein bL12 from Shewanella sp. (strain ANA-3).